We begin with the raw amino-acid sequence, 770 residues long: Proton-coupled zinc antiporter SLC30A5 (770 aa).

At 1–29 (MEEKYSSQALAGGGVLGPVDVPSARLTRY) the chain is on the cytoplasmic side. Residues 30–50 (IVLLCFAKFLKAVGLFESYDL) traverse the membrane as a helical segment. At 51–53 (LKA) the chain is on the lumenal side. A helical membrane pass occupies residues 54–74 (VHLVQFIFIVKLGSAFFMVLF). At 75–95 (QKPFSSGKVVTKHQWIKIFKH) the chain is on the cytoplasmic side. A helical transmembrane segment spans residues 96–116 (AVVGCIISLLWFFGLTLCGPL). A topological domain (lumenal) is located at residue Arg117. Residues 118–138 (TLLLFEHSDVVVLSLLSVLFT) form a helical membrane-spanning segment. Residues 139–149 (SSGGGPAKTRG) are Cytoplasmic-facing. A helical transmembrane segment spans residues 150 to 170 (AAFFIIAVICLLLFDNDDLMA). The Lumenal portion of the chain corresponds to 171–190 (KIAEHPEGHHDSALTHVLYT). A helical membrane pass occupies residues 191–211 (VIAFLGVADHKGGVLLLVLAL). Over 212–235 (CCKVGFHMASRKLSVDVGGAKRLQ) the chain is Cytoplasmic. Residues 236 to 256 (ALSHLVSVLLLCPWVIVLSLT) form a helical membrane-spanning segment. Topologically, residues 257–264 (TESKVESW) are lumenal. A helical transmembrane segment spans residues 265-285 (SSLIMPFITVIFFVVILDFYV). Over 286 to 300 (ESICSVKMESSKCAR) the chain is Cytoplasmic. Residues 301–321 (YGSFLIFISALLFGNFWTHPI) traverse the membrane as a helical segment. Topologically, residues 322 to 339 (TDQLRAMNKPAHHESTEH) are lumenal. Residues 340 to 360 (VLSGGVVVSAVFFILSANILS) traverse the membrane as a helical segment. At 361 to 415 (SPSRKGQKGTLIGYSPEGTPLYNFMGDAIQQSSQSLPRFIKESLKQILEEYDSRQ) the chain is on the cytoplasmic side. Residues 416–436 (IFYFLCLNLAFTFVELFYGVW) form a helical membrane-spanning segment. At 437–445 (TNSLGLISD) the chain is on the lumenal side. A helical membrane pass occupies residues 446–466 (GFHMLFDCSALVMGLFAALMT). 2 residues coordinate Zn(2+): His448 and Asp452. The Cytoplasmic portion of the chain corresponds to 467–480 (RWKATRIFSYGYGR). Residues 481–501 (VEILSGFINGLFLMVIAFFVF) traverse the membrane as a helical segment. The Lumenal portion of the chain corresponds to 502–517 (MESVARLVDPPDIDTN). A helical membrane pass occupies residues 518–538 (MLTPVSVGGLIVNLVGICAFS). Residues 539-579 (HAHSHGASRGGCHSHEHSHSYHGHSHSHGHGHSHNDHGHSH) are his-rich loop; required for zinc transport. The Cytoplasmic segment spans residues 539-597 (HAHSHGASRGGCHSHEHSHSYHGHSHSHGHGHSHNDHGHSHGHSHVSSGGGMNTNMRGV). The interval 548-586 (GGCHSHEHSHSYHGHSHSHGHGHSHNDHGHSHGHSHVSS) is disordered. The span at 558 to 570 (SYHGHSHSHGHGH) shows a compositional bias: basic residues. Residues 598-618 (FLHVLADTLGSVGVIVSTTFI) traverse the membrane as a helical segment. Residues His600 and Asp604 each contribute to the Zn(2+) site. The Lumenal segment spans residues 619 to 622 (QQFG). The helical transmembrane segment at 623–643 (WLIADPLCSLFIATLIFLSVI) threads the bilayer. Residues 644–770 (PLLKDACQVL…KYYKDGTYIM (127 aa)) are Cytoplasmic-facing.

The protein belongs to the cation diffusion facilitator (CDF) transporter (TC 2.A.4) family. SLC30A subfamily. In terms of assembly, heterodimer with SLC30A6/ZNT6; form a functional zinc ion transmembrane transporter.

Its subcellular location is the golgi apparatus. The protein localises to the golgi stack membrane. It is found in the cytoplasmic vesicle. The protein resides in the COPII-coated vesicle membrane. It localises to the secretory vesicle membrane. Its subcellular location is the trans-Golgi network membrane. The catalysed reaction is Zn(2+)(in) + 2 H(+)(out) = Zn(2+)(out) + 2 H(+)(in). Together with SLC30A6 forms a functional proton-coupled zinc ion antiporter mediating zinc entry into the lumen of organelles along the secretory pathway. By contributing to zinc ion homeostasis within the early secretory pathway, regulates the activation and folding of enzymes like alkaline phosphatases and enzymes involved in phosphatidylinositol glycan anchor biosynthesis. The protein is Proton-coupled zinc antiporter SLC30A5 of Gallus gallus (Chicken).